The following is a 282-amino-acid chain: MAITAAQVKELRDRTGAGMMDCKKALTETDGDIELAIDSMRKSGAAKAAKKAGNIAAEGTILIKNGEGYAALLEVNCQTDFVAKDANFLAFANAVLEVAAASKVTIEDLKAQFEETRIALVTKIGENINVRRVEYIDGANLASYRHGERIGVVVAGEADEETLKHVAMHVAASKPEFVNPEDVPADLVERERALQIEIAMNEGKPAEIAEKMVFGRMKKFTGEISLTGQAYIMEPKKTVGAILKEKGATVSNFVRLEVGEGIAKKEEDFAAEVAAQIAATKA.

Positions 79 to 82 (TDFV) are involved in Mg(2+) ion dislocation from EF-Tu.

It belongs to the EF-Ts family.

The protein resides in the cytoplasm. Associates with the EF-Tu.GDP complex and induces the exchange of GDP to GTP. It remains bound to the aminoacyl-tRNA.EF-Tu.GTP complex up to the GTP hydrolysis stage on the ribosome. The protein is Elongation factor Ts of Shewanella sediminis (strain HAW-EB3).